The chain runs to 311 residues: Methionyl-tRNA formyltransferase (311 aa).

112–115 (SLLP) contacts (6S)-5,6,7,8-tetrahydrofolate.

This sequence belongs to the Fmt family.

The enzyme catalyses L-methionyl-tRNA(fMet) + (6R)-10-formyltetrahydrofolate = N-formyl-L-methionyl-tRNA(fMet) + (6S)-5,6,7,8-tetrahydrofolate + H(+). Functionally, attaches a formyl group to the free amino group of methionyl-tRNA(fMet). The formyl group appears to play a dual role in the initiator identity of N-formylmethionyl-tRNA by promoting its recognition by IF2 and preventing the misappropriation of this tRNA by the elongation apparatus. The polypeptide is Methionyl-tRNA formyltransferase (Chelativorans sp. (strain BNC1)).